Consider the following 1065-residue polypeptide: Carbamoyl phosphate synthase large chain (1065 aa).

Positions 1–401 (MPKRTDIETI…AMLKAVRSLE (401 aa)) are carboxyphosphate synthetic domain. Arginine 129, arginine 169, glycine 175, glycine 176, lysine 208, isoleucine 210, glutamate 215, glycine 241, isoleucine 242, histidine 243, glutamine 284, and glutamate 298 together coordinate ATP. The ATP-grasp 1 domain maps to 133–327 (RNLMYELGAP…IAKLAAKIAV (195 aa)). Mg(2+)-binding residues include glutamine 284, glutamate 298, and asparagine 300. Mn(2+)-binding residues include glutamine 284, glutamate 298, and asparagine 300. The interval 402–546 (TGQVHLELKH…YGTYEEENES (145 aa)) is oligomerization domain. Residues 547-929 (IKSEKPSVVV…ALYKGLVAAG (383 aa)) are carbamoyl phosphate synthetic domain. Residues 671-861 (EQALRDLNIP…MANIATKAIL (191 aa)) enclose the ATP-grasp 2 domain. ATP-binding residues include arginine 707, arginine 746, leucine 748, glutamate 752, glycine 777, valine 778, histidine 779, serine 780, glutamine 820, and glutamate 832. Mg(2+) is bound by residues glutamine 820, glutamate 832, and asparagine 834. 3 residues coordinate Mn(2+): glutamine 820, glutamate 832, and asparagine 834. In terms of domain architecture, MGS-like spans 930–1065 (MEIRTEGTVL…EEMPKAEVVH (136 aa)). An allosteric domain region spans residues 930-1065 (MEIRTEGTVL…EEMPKAEVVH (136 aa)).

This sequence belongs to the CarB family. As to quaternary structure, composed of two chains; the small (or glutamine) chain promotes the hydrolysis of glutamine to ammonia, which is used by the large (or ammonia) chain to synthesize carbamoyl phosphate. Tetramer of heterodimers (alpha,beta)4. The cofactor is Mg(2+). Mn(2+) is required as a cofactor.

It carries out the reaction hydrogencarbonate + L-glutamine + 2 ATP + H2O = carbamoyl phosphate + L-glutamate + 2 ADP + phosphate + 2 H(+). It catalyses the reaction hydrogencarbonate + NH4(+) + 2 ATP = carbamoyl phosphate + 2 ADP + phosphate + 2 H(+). Its pathway is amino-acid biosynthesis; L-arginine biosynthesis; carbamoyl phosphate from bicarbonate: step 1/1. It functions in the pathway pyrimidine metabolism; UMP biosynthesis via de novo pathway; (S)-dihydroorotate from bicarbonate: step 1/3. Its function is as follows. Large subunit of the glutamine-dependent carbamoyl phosphate synthetase (CPSase). CPSase catalyzes the formation of carbamoyl phosphate from the ammonia moiety of glutamine, carbonate, and phosphate donated by ATP, constituting the first step of 2 biosynthetic pathways, one leading to arginine and/or urea and the other to pyrimidine nucleotides. The large subunit (synthetase) binds the substrates ammonia (free or transferred from glutamine from the small subunit), hydrogencarbonate and ATP and carries out an ATP-coupled ligase reaction, activating hydrogencarbonate by forming carboxy phosphate which reacts with ammonia to form carbamoyl phosphate. The chain is Carbamoyl phosphate synthase large chain from Lysinibacillus sphaericus (strain C3-41).